Here is a 381-residue protein sequence, read N- to C-terminus: Alkanesulfonate monooxygenase (381 aa).

The protein belongs to the SsuD family. In terms of assembly, homotetramer.

It carries out the reaction an alkanesulfonate + FMNH2 + O2 = an aldehyde + FMN + sulfite + H2O + 2 H(+). Its function is as follows. Catalyzes the desulfonation of aliphatic sulfonates. The chain is Alkanesulfonate monooxygenase from Escherichia coli O6:H1 (strain CFT073 / ATCC 700928 / UPEC).